The sequence spans 318 residues: tRNA-cytidine(32) 2-sulfurtransferase (318 aa).

A disordered region spans residues 1–29 (MNHVSSTKPDTAPSKHLTSSHIDATDQNN). Residues 16–27 (HLTSSHIDATDQ) are compositionally biased toward polar residues. The short motif at 64–69 (SGGKDS) is the PP-loop motif element. [4Fe-4S] cluster-binding residues include Cys139, Cys142, and Cys230.

Belongs to the TtcA family. As to quaternary structure, homodimer. Requires Mg(2+) as cofactor. The cofactor is [4Fe-4S] cluster.

Its subcellular location is the cytoplasm. It catalyses the reaction cytidine(32) in tRNA + S-sulfanyl-L-cysteinyl-[cysteine desulfurase] + AH2 + ATP = 2-thiocytidine(32) in tRNA + L-cysteinyl-[cysteine desulfurase] + A + AMP + diphosphate + H(+). Its pathway is tRNA modification. Its function is as follows. Catalyzes the ATP-dependent 2-thiolation of cytidine in position 32 of tRNA, to form 2-thiocytidine (s(2)C32). The sulfur atoms are provided by the cysteine/cysteine desulfurase (IscS) system. The chain is tRNA-cytidine(32) 2-sulfurtransferase from Pseudoalteromonas atlantica (strain T6c / ATCC BAA-1087).